The chain runs to 2798 residues: Kinesin-like protein KIN-12F (2798 aa).

The disordered stretch occupies residues 1–165; that stretch reads MVRDLAAVRR…RPPMSSGQRG (165 aa). Composition is skewed to low complexity over residues 8-22 and 31-58; these read VRRT…SSAS and PVDA…QPPQ. A Kinesin motor domain is found at 210–547; it reads NVQVVIRVRP…LKFAQRARLI (338 aa). 291-298 provides a ligand contact to ATP; the sequence is GQTGSGKT. A compositionally biased stretch (acidic residues) spans 600-615; sequence DVDDGTESMNMDEEND. The interval 600–621 is disordered; that stretch reads DVDDGTESMNMDEENDNDAHDR. Coiled-coil stretches lie at residues 792–835, 890–987, 1014–1108, 1281–1322, and 2130–2333; these read ELKR…HSSN, LAEE…HRRQ, LKRM…VMKE, QRAM…LKNE, and ELVD…VRQQ. The disordered stretch occupies residues 2338-2359; it reads PSSGQATSSLEGGMGDFTDSSR. Coiled coils occupy residues 2361–2427 and 2545–2758; these read SREI…VKSD and ESKE…LKLK. The disordered stretch occupies residues 2772–2798; sequence RSESSSLSSGRSRSPSVCRSPSISSFR. Residues 2774–2798 show a composition bias toward low complexity; that stretch reads ESSSLSSGRSRSPSVCRSPSISSFR.

Belongs to the TRAFAC class myosin-kinesin ATPase superfamily. Kinesin family. KIN-12 subfamily.

The chain is Kinesin-like protein KIN-12F from Oryza sativa subsp. japonica (Rice).